A 145-amino-acid polypeptide reads, in one-letter code: MLTAEEKAAVTAFWGKVKVDEVGGEALGRLLVVYPWTQRFFEHFGDLSTADAVMHNAKVKEHGKRVLDAFSEGLKHLDDLKGAFAKLSELHCDKLHVDPENFRLLGNVLVVVLARHFGKEFTPELQADYQKVVTGVANALAHRYH.

The region spanning 1–145 is the Globin domain; sequence MLTAEEKAAV…VANALAHRYH (145 aa). Thr-11 bears the Phosphothreonine mark. At Lys-58 the chain carries N6-acetyllysine. His-62 is a binding site for heme b. Lys-81 is subject to N6-acetyllysine. His-91 provides a ligand contact to heme b. Cys-92 bears the S-nitrosocysteine mark.

Belongs to the globin family. As to quaternary structure, heterotetramer of two alpha chains and two beta chains. As to expression, red blood cells.

Its function is as follows. Involved in oxygen transport from the lung to the various peripheral tissues. This Alces alces alces (European moose) protein is Hemoglobin subunit beta (HBB).